The primary structure comprises 200 residues: NADH-quinone oxidoreductase subunit B (200 aa).

The [4Fe-4S] cluster site is built by Cys78, Cys79, Cys144, and Cys174.

Belongs to the complex I 20 kDa subunit family. NDH-1 is composed of 14 different subunits. Subunits NuoB, C, D, E, F, and G constitute the peripheral sector of the complex. It depends on [4Fe-4S] cluster as a cofactor.

The protein resides in the cell membrane. It catalyses the reaction a quinone + NADH + 5 H(+)(in) = a quinol + NAD(+) + 4 H(+)(out). Its function is as follows. NDH-1 shuttles electrons from NADH, via FMN and iron-sulfur (Fe-S) centers, to quinones in the respiratory chain. The immediate electron acceptor for the enzyme in this species is believed to be ubiquinone. Couples the redox reaction to proton translocation (for every two electrons transferred, four hydrogen ions are translocated across the cytoplasmic membrane), and thus conserves the redox energy in a proton gradient. The polypeptide is NADH-quinone oxidoreductase subunit B (Dehalococcoides mccartyi (strain ATCC BAA-2100 / JCM 16839 / KCTC 5957 / BAV1)).